The chain runs to 1100 residues: MLERIQQLVNAVNDPRSDVATKRQAIELLNGIKSSENALEIFISLVINENSNDLLKFYGLSTLIELMTEGVNANPNGLNLVKFEITKWLKFQVLGNKQTKLPDFLMNKISEVLTTLFMLMYSDCNGNQWNSFFDDLMSLFQVDSAISNTSPSTDGNILLGLEFFNKLCLMINSEIADQSFIRSKESQLKNNNIKDWMRDNDIMKLSNVWFQCLKLDEQIVSQCPGLINSTLDCIGSFISWIDINLIIDANNYYLQLIYKFLNLKETKISCYNCILAIISKKMKPMDKLAFLNMINLTNELTYYHQAISMNPQIITFDNLEVWESLTKLITSFGIEFTIIIEQVNDDQKLDTLYKQSVISNVDSILLEKIIPILLEFMNNEFDSITAKTFPFWSNYLAFLKKYKASSPNFVPLHKDFLDNFQQICFKRMKFSDDEVTQDDFEEFNETVRFKLKNFQEIIVVIDPSLFLNNISQEISANLMNCKNESWQIFELTIYQIFNLSECTKNNYFGLNKNEIMTSQPSLTLVRFLNELLMMKDFLLAIDNEQIQILFMELIVKNYNFIFSTSANTANATDDDEKYLLILNIFMSSFAMFNKRENVRLRSWYLFTRFLKLTRINLKKILFANKNLVNEITNKISPLLHIKVTSINAQGTDDNDTIFDNQLYIFEGIGFIITLNNSSQELTAATANTPIDYDILDQILTPLFTQLEGCITQGASPVVILECHHILMAIGTLARGLHIGLVPENQVNNMVVNKKLINDSLIHKFSNIAEVILVTFSFFNKFENIRDASRFTFARLIPILSNKILPFINKLIELILSSTDLKSWEMIDFLGFLSQLIHMFHTDTDCYQLFNQLLTPLINKVHSIIEEIDEQHDQQSSSNKPIDTAVTATSVNKNIVVTDSYRDKILLKKAYCTFLQSFTNNSVTSILLSDINRAILPVILNDLVTYTPQEIQETSMMKVSLNVLCNFIKCFGNGTCLDNDDINKDPNLKIDGLNEYFIMKCVPIIFEIPFNPIYKFNIKEGNFKTMAYDLARLLRELFIVSSNPTTNENECVKYLTQIYLPQIQLPQELTIQLVNMLTTMGQKQFEKWFVDNFISVLKQGQ.

It belongs to the exportin family. As to quaternary structure, interacts with CEX1, GSP1, GSP2, NSP1, NUP2 and UTP8.

Its subcellular location is the nucleus. It localises to the cytoplasm. In terms of biological role, tRNA nucleus export receptor which facilitates tRNA translocation across the nuclear pore complex. Preferentially interacts with tRNAs with mature 5'- and 3'-termini and does not distinguish between intron-containing and spliced tRNAs. In the nucleus binds to tRNA and to the Ran-GTPases GSP1 or GSP2 in their active GTP-bound form. Docking of this trimeric complex to the nuclear pore complex (NPC) is mediated through binding to nucleoporins. Upon transit of a nuclear export complex into the cytoplasm, disassembling of the complex and hydrolysis of Ran-GTP to Ran-GDP cause release of the tRNA from the export receptor. The directionality of nuclear export is thought to be conferred by an asymmetric distribution of the GTP- and GDP-bound forms of Ran between the cytoplasm and nucleus. In Saccharomyces cerevisiae (strain ATCC 204508 / S288c) (Baker's yeast), this protein is Exportin-T (LOS1).